A 458-amino-acid chain; its full sequence is Tyrosine phenol-lyase (458 aa).

Lysine 258 carries the post-translational modification N6-(pyridoxal phosphate)lysine.

It belongs to the beta-eliminating lyase family. Homotetramer. Requires pyridoxal 5'-phosphate as cofactor.

It catalyses the reaction L-tyrosine + H2O = phenol + pyruvate + NH4(+). In Pasteurella multocida (strain Pm70), this protein is Tyrosine phenol-lyase (tpl).